The primary structure comprises 106 residues: Large ribosomal subunit protein uL24 (106 aa).

Belongs to the universal ribosomal protein uL24 family. As to quaternary structure, part of the 50S ribosomal subunit.

In terms of biological role, one of two assembly initiator proteins, it binds directly to the 5'-end of the 23S rRNA, where it nucleates assembly of the 50S subunit. Its function is as follows. One of the proteins that surrounds the polypeptide exit tunnel on the outside of the subunit. This chain is Large ribosomal subunit protein uL24, found in Dechloromonas aromatica (strain RCB).